Reading from the N-terminus, the 341-residue chain is Phenylalanine--tRNA ligase alpha subunit (341 aa).

E253 provides a ligand contact to Mg(2+).

Belongs to the class-II aminoacyl-tRNA synthetase family. Phe-tRNA synthetase alpha subunit type 1 subfamily. Tetramer of two alpha and two beta subunits. It depends on Mg(2+) as a cofactor.

Its subcellular location is the cytoplasm. The enzyme catalyses tRNA(Phe) + L-phenylalanine + ATP = L-phenylalanyl-tRNA(Phe) + AMP + diphosphate + H(+). The sequence is that of Phenylalanine--tRNA ligase alpha subunit from Methylococcus capsulatus (strain ATCC 33009 / NCIMB 11132 / Bath).